We begin with the raw amino-acid sequence, 364 residues long: tRNA 2-selenouridine synthase (364 aa).

Residues 14–137 (LIADTPIIDV…LRQTAIQATI (124 aa)) form the Rhodanese domain. Cys-97 functions as the S-selanylcysteine intermediate in the catalytic mechanism.

Belongs to the SelU family. Monomer.

The catalysed reaction is 5-methylaminomethyl-2-thiouridine(34) in tRNA + selenophosphate + (2E)-geranyl diphosphate + H2O + H(+) = 5-methylaminomethyl-2-selenouridine(34) in tRNA + (2E)-thiogeraniol + phosphate + diphosphate. It catalyses the reaction 5-methylaminomethyl-2-thiouridine(34) in tRNA + (2E)-geranyl diphosphate = 5-methylaminomethyl-S-(2E)-geranyl-thiouridine(34) in tRNA + diphosphate. The enzyme catalyses 5-methylaminomethyl-S-(2E)-geranyl-thiouridine(34) in tRNA + selenophosphate + H(+) = 5-methylaminomethyl-2-(Se-phospho)selenouridine(34) in tRNA + (2E)-thiogeraniol. It carries out the reaction 5-methylaminomethyl-2-(Se-phospho)selenouridine(34) in tRNA + H2O = 5-methylaminomethyl-2-selenouridine(34) in tRNA + phosphate. Involved in the post-transcriptional modification of the uridine at the wobble position (U34) of tRNA(Lys), tRNA(Glu) and tRNA(Gln). Catalyzes the conversion of 2-thiouridine (S2U-RNA) to 2-selenouridine (Se2U-RNA). Acts in a two-step process involving geranylation of 2-thiouridine (S2U) to S-geranyl-2-thiouridine (geS2U) and subsequent selenation of the latter derivative to 2-selenouridine (Se2U) in the tRNA chain. The protein is tRNA 2-selenouridine synthase of Escherichia coli (strain SMS-3-5 / SECEC).